The sequence spans 744 residues: Vesicle-fusing ATPase (744 aa).

Lys105 is subject to N6-acetyllysine. Ser207 is subject to Phosphoserine. Tyr259 bears the Phosphotyrosine mark. Residues Asn505–Trp510 and Pro545–Leu552 contribute to the ATP site. Position 550 (Thr550) interacts with Mg(2+). Ser569 bears the Phosphoserine; by CDK16 mark.

This sequence belongs to the AAA ATPase family. As to quaternary structure, homohexamer. Interacts with GABARAP and GABARAPL2. Interacts with GRIA2. Interacts with PLK2, leading to disrupt the interaction with GRIA2. Interacts with MUSK; may regulate MUSK endocytosis and activity. Interacts with CDK16. It depends on Mg(2+) as a cofactor. In terms of processing, phosphorylation at Ser-569 interferes with homohexamerization.

The protein resides in the cytoplasm. It carries out the reaction ATP + H2O = ADP + phosphate + H(+). Functionally, required for vesicle-mediated transport. Catalyzes the fusion of transport vesicles within the Golgi cisternae. Is also required for transport from the endoplasmic reticulum to the Golgi stack. Seems to function as a fusion protein required for the delivery of cargo proteins to all compartments of the Golgi stack independent of vesicle origin. Interaction with AMPAR subunit GRIA2 leads to influence GRIA2 membrane cycling. The chain is Vesicle-fusing ATPase (NSF) from Pongo abelii (Sumatran orangutan).